The following is a 112-amino-acid chain: Keratin-associated protein 12-4 (112 aa).

Repeat copies occupy residues 10-14, 20-24, 25-29, 35-39, 41-45, 46-50, 56-60, 61-65, 66-70, 71-75, 76-80, 81-85, 86-90, 91-95, and 96-100. A 15 X 5 AA approximate repeats region spans residues 10–100; that stretch reads CPMACPGSPC…CCQPFCPTLV (91 aa).

Belongs to the KRTAP type 12 family. In terms of assembly, interacts with hair keratins. As to expression, restricted to a narrow region of the hair fiber cuticle, lying approximately 20 cell layers above the apex of the dermal papilla of the hair root; not detected in any other tissues.

Functionally, in the hair cortex, hair keratin intermediate filaments are embedded in an interfilamentous matrix, consisting of hair keratin-associated proteins (KRTAP), which are essential for the formation of a rigid and resistant hair shaft through their extensive disulfide bond cross-linking with abundant cysteine residues of hair keratins. The matrix proteins include the high-sulfur and high-glycine-tyrosine keratins. This is Keratin-associated protein 12-4 (KRTAP12-4) from Homo sapiens (Human).